Consider the following 5058-residue polypeptide: ATP-binding cassette sub-family A member 13 (5058 aa).

7 helical membrane passes run 23-43 (PVLFLAEFFWPCILFVILTVL), 3568-3588 (VGFFFPLIMMLTWMVSVASMV), 3607-3627 (GVHPVIHFLAWFLENMAVLTI), 3648-3668 (FIVFLFLLDFGMSVVMLSYLL), 3679-3699 (ALCTSLVYMISFLPYIVLLVL), 3709-3729 (TFLCLLSTTAFGQGVFFITFL), and 3752-3772 (FGWVCWMILFDSSLYFLCGWY). In terms of domain architecture, ABC transporter 1 spans 3842–4074 (VTLVSVTKEY…YGQGLRLTLT (233 aa)). 3875–3882 (GTNGAGKT) is an ATP binding site. Helical transmembrane passes span 4226–4246 (TLADLLLPVLFVALAMGLFMV), 4458–4478 (VALCIVLGFSILSASIGSSVV), 4504–4524 (FLYDMLFYLVSVCLCVAVIVA), 4536–4556 (LAATALLLSLFGYATLPWMYL), 4568–4588 (FISYVSLNFIFGLCTMLITIM), 4607–4627 (VLKWVFTIFPQFCLGQGLVEL), and 4651–4671 (MNFLGWIFVQLASQGTVLLLL). An ABC transporter 2 domain is found at 4718 to 4956 (LVLYNLSKHY…FGDGYTVKVW (239 aa)). Residue 4754–4761 (GVNGAGKS) participates in ATP binding.

The protein belongs to the ABC transporter superfamily. As to expression, significantly expressed in the bone marrow, trachea, testis, thyroid and lung as well as in skin fibroblasts.

It localises to the cytoplasmic vesicle membrane. It catalyses the reaction cholesterol(in) + ATP + H2O = cholesterol(out) + ADP + phosphate + H(+). May mediate the cholesterol and gangliosides transport from the plasma membrane to intracellular vesicles in an ATP hydrolysis dependent manner, thus playing a role in their internalization by endocytic retrograde transport and may also participate in the endocytosis of synaptic vesicle in cortical neurons. This chain is ATP-binding cassette sub-family A member 13, found in Homo sapiens (Human).